We begin with the raw amino-acid sequence, 284 residues long: 4-hydroxy-3-methylbut-2-enyl diphosphate reductase (284 aa).

Residue Cys-12 participates in [4Fe-4S] cluster binding. The (2E)-4-hydroxy-3-methylbut-2-enyl diphosphate site is built by His-40 and His-72. Dimethylallyl diphosphate-binding residues include His-40 and His-72. Residues His-40 and His-72 each coordinate isopentenyl diphosphate. Position 94 (Cys-94) interacts with [4Fe-4S] cluster. Residue His-122 coordinates (2E)-4-hydroxy-3-methylbut-2-enyl diphosphate. A dimethylallyl diphosphate-binding site is contributed by His-122. His-122 provides a ligand contact to isopentenyl diphosphate. The active-site Proton donor is Glu-124. Position 161 (Thr-161) interacts with (2E)-4-hydroxy-3-methylbut-2-enyl diphosphate. Cys-193 lines the [4Fe-4S] cluster pocket. Ser-221, Asn-223, and Ser-264 together coordinate (2E)-4-hydroxy-3-methylbut-2-enyl diphosphate. Residues Ser-221, Asn-223, and Ser-264 each coordinate dimethylallyl diphosphate. The isopentenyl diphosphate site is built by Ser-221, Asn-223, and Ser-264.

The protein belongs to the IspH family. The cofactor is [4Fe-4S] cluster.

The catalysed reaction is isopentenyl diphosphate + 2 oxidized [2Fe-2S]-[ferredoxin] + H2O = (2E)-4-hydroxy-3-methylbut-2-enyl diphosphate + 2 reduced [2Fe-2S]-[ferredoxin] + 2 H(+). It catalyses the reaction dimethylallyl diphosphate + 2 oxidized [2Fe-2S]-[ferredoxin] + H2O = (2E)-4-hydroxy-3-methylbut-2-enyl diphosphate + 2 reduced [2Fe-2S]-[ferredoxin] + 2 H(+). The protein operates within isoprenoid biosynthesis; dimethylallyl diphosphate biosynthesis; dimethylallyl diphosphate from (2E)-4-hydroxy-3-methylbutenyl diphosphate: step 1/1. It participates in isoprenoid biosynthesis; isopentenyl diphosphate biosynthesis via DXP pathway; isopentenyl diphosphate from 1-deoxy-D-xylulose 5-phosphate: step 6/6. Functionally, catalyzes the conversion of 1-hydroxy-2-methyl-2-(E)-butenyl 4-diphosphate (HMBPP) into a mixture of isopentenyl diphosphate (IPP) and dimethylallyl diphosphate (DMAPP). Acts in the terminal step of the DOXP/MEP pathway for isoprenoid precursor biosynthesis. The sequence is that of 4-hydroxy-3-methylbut-2-enyl diphosphate reductase from Dehalococcoides mccartyi (strain ATCC BAA-2100 / JCM 16839 / KCTC 5957 / BAV1).